A 276-amino-acid chain; its full sequence is UPF0328 protein ECU08_2080 (276 aa).

The interval methionine 1 to histidine 24 is disordered.

It belongs to the UPF0328 family.

The polypeptide is UPF0328 protein ECU08_2080 (Encephalitozoon cuniculi (strain GB-M1) (Microsporidian parasite)).